Consider the following 706-residue polypeptide: Glycine--tRNA ligase beta subunit (706 aa).

This sequence belongs to the class-II aminoacyl-tRNA synthetase family. In terms of assembly, tetramer of two alpha and two beta subunits.

The protein localises to the cytoplasm. It carries out the reaction tRNA(Gly) + glycine + ATP = glycyl-tRNA(Gly) + AMP + diphosphate. The protein is Glycine--tRNA ligase beta subunit of Acidobacterium capsulatum (strain ATCC 51196 / DSM 11244 / BCRC 80197 / JCM 7670 / NBRC 15755 / NCIMB 13165 / 161).